The sequence spans 373 residues: MKILVDENMPYATELFSRLGNVQAVPGRPIPSDALADADALMVRSVTKVNEALLAGTRIGFVGTATAGTDHVDDVWLQQQGIGFSAAPGCNAIAVVEYVFSALMLLAERDGFQLRDKTVGIIGVGNVGSRLDARLKALGVRTLLCDPPRAERGDAGEFWPLEKLVAEADVLTFHTPLNKSGPYNSLHLVDAELLAALPDNRILINACRGAVVDNAALLQALEKGKKLSTVLDVWEPEPELSLPLLARVDIGTAHIAGYTLEGKARGTTQVFEAFSRHLGQPQQIELASLLPVPEFSQIQLNGPLDEGKLKRLMHLVYDVRRDDAPLRKVAGQPGEFDRLRKHYQERREWSSLRVQCDDSASAELLHKLGFLTA.

The substrate site is built by serine 45 and threonine 66. 2 residues coordinate NAD(+): aspartate 146 and threonine 175. The active site involves arginine 208. Aspartate 232 provides a ligand contact to NAD(+). Residue glutamate 237 is part of the active site. Residue histidine 254 is the Proton donor of the active site. Glycine 257 is an NAD(+) binding site. Tyrosine 258 contributes to the substrate binding site.

Belongs to the D-isomer specific 2-hydroxyacid dehydrogenase family. PdxB subfamily. Homodimer.

Its subcellular location is the cytoplasm. The catalysed reaction is 4-phospho-D-erythronate + NAD(+) = (R)-3-hydroxy-2-oxo-4-phosphooxybutanoate + NADH + H(+). The protein operates within cofactor biosynthesis; pyridoxine 5'-phosphate biosynthesis; pyridoxine 5'-phosphate from D-erythrose 4-phosphate: step 2/5. Catalyzes the oxidation of erythronate-4-phosphate to 3-hydroxy-2-oxo-4-phosphonooxybutanoate. The protein is Erythronate-4-phosphate dehydrogenase of Serratia proteamaculans (strain 568).